The chain runs to 395 residues: uncharacterized protein (395 aa).

Positions 286-306 are enriched in low complexity; it reads SSNKSSESTMTSPLDSASSLH. The tract at residues 286–395 is disordered; the sequence is SSNKSSESTM…RNDDSGLESV (110 aa). Over residues 350–362 the composition is skewed to pro residues; that stretch reads RPPPPSVHPPIFP. The span at 364-385 shows a compositional bias: polar residues; the sequence is QTQLFHPPTYSTQRHVTSPNSS.

This is an uncharacterized protein from Caenorhabditis elegans.